The chain runs to 89 residues: DNA/RNA-binding protein Alba 1 (89 aa).

The protein belongs to the histone-like Alba family.

Its subcellular location is the cytoplasm. It is found in the chromosome. Functionally, binds double-stranded DNA tightly but without sequence specificity. Involved in DNA compaction. The polypeptide is DNA/RNA-binding protein Alba 1 (Archaeoglobus fulgidus (strain ATCC 49558 / DSM 4304 / JCM 9628 / NBRC 100126 / VC-16)).